A 951-amino-acid chain; its full sequence is MLLSETHFWTTLREDVVRIKSQDLGAFRYLRQRDKEQEQQDLACLAKRDYTERRNGLAVLKNSGRKSTGRLKDNLKKLEDLLRQHRIIHSEWQDAAQVLLLFSHGLIAHICVDIYTGDILRMVFEKYLVGKLASEVITDAFFTRSHIVLAYNTNQLTVVHLQRPNARSQGPEKIANMDPRIFHVIIPGATERKLSRHLTVNASFDLFVVWTQSSQNEVYPWRPTIRDQDRANIHVFKIKGLQLESIAYCWSENDPLCVDFLRSSESQIITLEQKVSRKGDISAEICSYELAAGKMQRTAITSIPMGAQICSFAFSPDQEKLFLGSVDRNICLHDLVQQSTKYANQIEIVPNQCAWHCDSAMLCVANERSVLQCFDLALATIGHQLVSENVTPSSLLDLSHYFVAQPTLLSVAFSRKPDLSTFKHTYAQTDCLLLLVYEQGPLACMRIFGGTGMRGDIHNSGLTADVIADKYLRLQQPDRAVNVLAALNWETYGAMCLITLHKIANYVFFGGDQRRPRIELMARALKTFAHTLSEETKDEFSDQVYDLKRRFCFYLLRKNLFAEAFEIAQDVADYDIFMDLYNLTKCISSLSEFAQVAFSQAAAIIHEEDRANGNLSLTCDLRSESACSLSTCSDMLRGQGAGTAPETGLGASQPQSQQVLKNYVPPLPSFKSKVFNAEMIKINIPKPELRPPLPKVSIAPPTSSLASLTLKSNSSLQQAPAKSLHPNGNLWSQDVPDQTVGLPMASSPLPRLPPSNIPDQSAQLGQFSTMPASPPPTGSYQPKFYQHPLVSGNIPAMLPSLTSEDYQKRLLQKKPTASILSNPANPAPTNGEAPATPAKSQTAEKNKVKFSDTIQVAVVPEIPRKEKPMPPKRNGYSRPAARHLTNPKKELADSLPLCHPNDEYLKDFNPITTNVTKPPIRRREEEPKSSSKGGNSSSSSSSIKVVHFGVV.

2 WD repeats span residues 304 to 343 and 345 to 384; these read PMGAQICSFAFSPDQEKLFLGSVDRNICLHDLVQQSTKYA and QIEIVPNQCAWHCDSAMLCVANERSVLQCFDLALATIGHQ. Composition is skewed to polar residues over residues 709 to 720, 757 to 771, and 818 to 828; these read TLKSNSSLQQAP, IPDQSAQLGQFSTMP, and SILSNPANPAP. Disordered regions lie at residues 709-776, 816-883, and 903-951; these read TLKS…SPPP, TASI…AARH, and EYLK…FGVV. Positions 930-942 are enriched in low complexity; it reads SSKGGNSSSSSSS.

Belongs to the WD repeat fritz family.

The protein localises to the cell membrane. It is found in the cytoplasm. Its subcellular location is the cytoskeleton. The protein resides in the cilium axoneme. Its function is as follows. Probable effector of the planar cell polarity signaling pathway which regulates the septin cytoskeleton in both ciliogenesis and collective cell movements. Functions cell autonomously to regulate wing cell hair polarity and number. The protein is WD repeat-containing and planar cell polarity effector protein fritz (frtz) of Drosophila melanogaster (Fruit fly).